We begin with the raw amino-acid sequence, 127 residues long: Large ribosomal subunit protein bL12 (127 aa).

The protein belongs to the bacterial ribosomal protein bL12 family. Homodimer. Part of the ribosomal stalk of the 50S ribosomal subunit. Forms a multimeric L10(L12)X complex, where L10 forms an elongated spine to which 2 to 4 L12 dimers bind in a sequential fashion. Binds GTP-bound translation factors.

Forms part of the ribosomal stalk which helps the ribosome interact with GTP-bound translation factors. Is thus essential for accurate translation. The protein is Large ribosomal subunit protein bL12 of Chloroherpeton thalassium (strain ATCC 35110 / GB-78).